A 392-amino-acid chain; its full sequence is Succinate--CoA ligase [ADP-forming] subunit beta (392 aa).

The ATP-grasp domain maps to 9–248 (KDILRKFGVA…TNEEDPFEVE (240 aa)). ATP contacts are provided by residues Lys50, 57–59 (GRG), Glu103, Met106, and Glu111. Asn203 and Asp217 together coordinate Mg(2+). Substrate is bound by residues Asn268 and 325–327 (GIV).

The protein belongs to the succinate/malate CoA ligase beta subunit family. Heterotetramer of two alpha and two beta subunits. Requires Mg(2+) as cofactor.

It carries out the reaction succinate + ATP + CoA = succinyl-CoA + ADP + phosphate. The enzyme catalyses GTP + succinate + CoA = succinyl-CoA + GDP + phosphate. It participates in carbohydrate metabolism; tricarboxylic acid cycle; succinate from succinyl-CoA (ligase route): step 1/1. Succinyl-CoA synthetase functions in the citric acid cycle (TCA), coupling the hydrolysis of succinyl-CoA to the synthesis of either ATP or GTP and thus represents the only step of substrate-level phosphorylation in the TCA. The beta subunit provides nucleotide specificity of the enzyme and binds the substrate succinate, while the binding sites for coenzyme A and phosphate are found in the alpha subunit. This chain is Succinate--CoA ligase [ADP-forming] subunit beta, found in Pelodictyon phaeoclathratiforme (strain DSM 5477 / BU-1).